A 166-amino-acid polypeptide reads, in one-letter code: Nucleotide-binding protein SUN_0226 (166 aa).

The protein belongs to the YajQ family.

In terms of biological role, nucleotide-binding protein. This Sulfurovum sp. (strain NBC37-1) protein is Nucleotide-binding protein SUN_0226.